Reading from the N-terminus, the 93-residue chain is Putative septation protein SpoVG (93 aa).

It belongs to the SpoVG family.

Its function is as follows. Could be involved in septation. The protein is Putative septation protein SpoVG of Lachnoclostridium phytofermentans (strain ATCC 700394 / DSM 18823 / ISDg) (Clostridium phytofermentans).